The sequence spans 486 residues: Cardiolipin synthase A (486 aa).

2 consecutive transmembrane segments (helical) span residues 3–23 (TVYT…IAGV) and 38–58 (MAWL…YLAV). 2 consecutive PLD phosphodiesterase domains span residues 219–246 (MDLR…VDPR) and 399–426 (EGGL…DMRS). Residues His-224, Lys-226, Asp-231, His-404, Lys-406, and Asp-411 contribute to the active site.

This sequence belongs to the phospholipase D family. Cardiolipin synthase subfamily. ClsA sub-subfamily.

The protein resides in the cell inner membrane. It carries out the reaction 2 a 1,2-diacyl-sn-glycero-3-phospho-(1'-sn-glycerol) = a cardiolipin + glycerol. In terms of biological role, catalyzes the reversible phosphatidyl group transfer from one phosphatidylglycerol molecule to another to form cardiolipin (CL) (diphosphatidylglycerol) and glycerol. The polypeptide is Cardiolipin synthase A (Escherichia coli O7:K1 (strain IAI39 / ExPEC)).